Reading from the N-terminus, the 522-residue chain is Amphoterin-induced protein 2 (522 aa).

Positions 1-39 (MSLRVHTLPTLLGAVVRPGCRELLCLLMITVTVGPGASG) are cleaved as a signal peptide. The LRRNT domain occupies 40–68 (VCPTACICATDIVSCTNKNLSKVPGNLFR). At 40–398 (VCPTACICAT…RSHAHEAFNT (359 aa)) the chain is on the extracellular side. 2 disulfides stabilise this stretch: Cys41/Cys47 and Cys45/Cys54. An N-linked (GlcNAc...) asparagine glycan is attached at Asn58. LRR repeat units follow at residues 69–90 (LIKR…WIPV), 94–115 (KLNT…SFST), 118–139 (NLKC…VFQE), 142–163 (VLEV…AFGG), 166–187 (QLQK…LYVG), and 193–214 (ELMF…HINL). A glycan (N-linked (GlcNAc...) asparagine) is linked at Asn104. The region spanning 228 to 284 (NPFVCDCSLYSLLVFWYRRHFSSVMDFKNDYTCRLWSDSRHSRQVLLLQDSFMNCSD) is the LRRCT domain. 2 disulfides stabilise this stretch: Cys232–Cys260 and Cys234–Cys282. 6 N-linked (GlcNAc...) asparagine glycosylation sites follow: Asn281, Asn288, Asn345, Asn373, Asn381, and Asn384. The region spanning 289–379 (GSFRALGFIH…RLLNETVDVT (91 aa)) is the Ig-like C2-type domain. Cysteines 310 and 363 form a disulfide. A helical transmembrane segment spans residues 399 to 419 (AFTTLAACVASIVLVLLYLYL). Residues 420-522 (TPCPCKCKTK…FSDTPFVAST (103 aa)) lie on the Cytoplasmic side of the membrane. Residues 501-522 (RGKSDSDSVNSVFSDTPFVAST) form a disordered region.

It belongs to the immunoglobulin superfamily. AMIGO family. In terms of assembly, binds itself as well as AMIGO1 and AMIGO3. In terms of tissue distribution, highest levels in breast, ovary, cervix, and uterus. Lower levels in lung, colon, and rectum. Differentially expressed in 56% of thyroid, 57% of pancreatic and 45% of stomach cancers.

It localises to the cell membrane. The protein resides in the nucleus. Required for depolarization-dependent survival of cultured cerebellar granule neurons. May mediate homophilic as well as heterophilic cell-cell interaction with AMIGO1 or AMIGO3. May contribute to signal transduction through its intracellular domain. May be required for tumorigenesis of a subset of gastric adenocarcinomas. The chain is Amphoterin-induced protein 2 from Homo sapiens (Human).